Here is a 452-residue protein sequence, read N- to C-terminus: Trigger factor (452 aa).

The region spanning 170–255 (GDRVTIDFTG…VKSVAAPGPL (86 aa)) is the PPIase FKBP-type domain.

This sequence belongs to the FKBP-type PPIase family. Tig subfamily.

The protein resides in the cytoplasm. It carries out the reaction [protein]-peptidylproline (omega=180) = [protein]-peptidylproline (omega=0). Functionally, involved in protein export. Acts as a chaperone by maintaining the newly synthesized protein in an open conformation. Functions as a peptidyl-prolyl cis-trans isomerase. The polypeptide is Trigger factor (Xanthobacter autotrophicus (strain ATCC BAA-1158 / Py2)).